A 114-amino-acid chain; its full sequence is Small ribosomal subunit protein bS6 (114 aa).

It belongs to the bacterial ribosomal protein bS6 family.

In terms of biological role, binds together with bS18 to 16S ribosomal RNA. This chain is Small ribosomal subunit protein bS6, found in Bacteroides fragilis (strain YCH46).